Here is a 110-residue protein sequence, read N- to C-terminus: UPF0122 protein GK1195 (110 aa).

It belongs to the UPF0122 family.

In terms of biological role, might take part in the signal recognition particle (SRP) pathway. This is inferred from the conservation of its genetic proximity to ftsY/ffh. May be a regulatory protein. The sequence is that of UPF0122 protein GK1195 from Geobacillus kaustophilus (strain HTA426).